The primary structure comprises 270 residues: Splicing factor YJU2 (270 aa).

Residues 1-32 (MSERKVLNKYIPPDYDPSIRPPKKKKKFQGPN) are disordered. The Zn(2+) site is built by cysteine 48, cysteine 51, cysteine 84, and cysteine 87. Residues 251–270 (PNFQPPKYAKRKMEKKKVLV) form a disordered region. Residues 258-270 (YAKRKMEKKKVLV) show a composition bias toward basic residues.

It belongs to the CWC16 family. YJU2 subfamily. Component of the spliceosome. Present in the activated B complex, the catalytically activated B* complex which catalyzes the branching, the catalytic step 1 C complex catalyzing the exon ligation, and the postcatalytic P complex containing the ligated exons (mRNA) and the excised lariat intron. Belongs to the 40S cdc5-associated complex (or cwf complex), a spliceosome sub-complex reminiscent of a late-stage spliceosome composed of the U2, U5 and U6 snRNAs and at least brr2, cdc5, cwf2/prp3, cwf3/syf1, cwf4/syf3, cwf5/ecm2, spp42/cwf6, cwf7/spf27, cwf8, cwf9, cwf10, cwf11, cwf12, prp45/cwf13, cwf14, cwf15, cwf16, cwf17, cwf18, cwf19, cwf20, cwf21, cwf22, cwf23, cwf24, cwf25, cwf26, cyp7/cwf27, cwf28, cwf29/ist3, lea1, msl1, prp5/cwf1, prp10, prp12/sap130, prp17, prp22, sap61, sap62, sap114, sap145, slu7, smb1, smd1, smd3, smf1, smg1 and syf2.

The protein resides in the nucleus. In terms of biological role, part of the spliceosome which catalyzes two sequential transesterification reactions, first the excision of the non-coding intron from pre-mRNA and then the ligation of the coding exons to form the mature mRNA. Plays a role in stabilizing the structure of the spliceosome catalytic core and docking of the branch helix into the active site, producing 5'-exon and lariat intron-3'-intermediates. The sequence is that of Splicing factor YJU2 (cwf16) from Schizosaccharomyces pombe (strain 972 / ATCC 24843) (Fission yeast).